A 749-amino-acid chain; its full sequence is Meiotically up-regulated gene 122 protein (749 aa).

The Cytoplasmic portion of the chain corresponds to 1–20 (MYRKWDLCITRHLLPYIEHS). A helical; Signal-anchor for type II membrane protein transmembrane segment spans residues 21–41 (VIPIIALLVLSLIFYILYICF). Residues 42-749 (GTTSYILSGI…LLSNALRSII (708 aa)) lie on the Lumenal side of the membrane. A PXA domain is found at 88-261 (PPELEAPLQL…CIILYFSSSE (174 aa)). A PX domain is found at 311–422 (LHYQFLKEAS…KFFAKSMRSH (112 aa)). 2 disordered regions span residues 439-489 (QSSS…LSQQ) and 504-546 (GSCT…PPKP). Polar residues-rich tracts occupy residues 440-461 (SSSV…NKTS) and 475-489 (LSHQ…LSQQ).

It belongs to the sorting nexin family.

The protein localises to the endoplasmic reticulum membrane. Has a role in meiosis. The sequence is that of Meiotically up-regulated gene 122 protein (mug122) from Schizosaccharomyces pombe (strain 972 / ATCC 24843) (Fission yeast).